The following is a 189-amino-acid chain: Transcription factor FapR (189 aa).

Belongs to the FapR family.

In terms of biological role, transcriptional factor involved in regulation of membrane lipid biosynthesis by repressing genes involved in fatty acid and phospholipid metabolism. The chain is Transcription factor FapR from Listeria innocua serovar 6a (strain ATCC BAA-680 / CLIP 11262).